The chain runs to 299 residues: MSTGKETAGAHEAAIPELVIISGMSGAGRSTAAKCLEDLGWFVVDNLPPALIPTMVELGARSQGNVARIAVVVDVRGRRFFDNLRESLADLDARGVTRRIVFLESSDDALVRRFESVRRPHPLQGDGRIVDGIAAERELLRELRGDADLVIDTSSLNVHELRAKMDAQFAGDQEPELRATVMSFGFKYGLPVDADLVVDMRFLPNPHWVPELRPFTGLNEEVSSYVLNQPGAKEFLDRYAELLQLIAAGYRREGKRYVTVAVGCTGGKHRSVAMSEKLAARLAAEGVETVVVHRDMGRE.

ATP is bound at residue Gly-23–Ser-30. Position 74–77 (Asp-74–Gly-77) interacts with GTP.

Belongs to the RapZ-like family.

In terms of biological role, displays ATPase and GTPase activities. This chain is Nucleotide-binding protein SCO1952, found in Streptomyces coelicolor (strain ATCC BAA-471 / A3(2) / M145).